The sequence spans 63 residues: Large ribosomal subunit protein uL29 (63 aa).

This sequence belongs to the universal ribosomal protein uL29 family.

The protein is Large ribosomal subunit protein uL29 of Vibrio cholerae serotype O1 (strain ATCC 39541 / Classical Ogawa 395 / O395).